The primary structure comprises 66 residues: Large ribosomal subunit protein bL35 (66 aa).

The segment covering M1 to R24 has biased composition (basic residues). Positions M1–H26 are disordered.

The protein belongs to the bacterial ribosomal protein bL35 family.

This Bacillus cytotoxicus (strain DSM 22905 / CIP 110041 / 391-98 / NVH 391-98) protein is Large ribosomal subunit protein bL35.